We begin with the raw amino-acid sequence, 132 residues long: Small ribosomal subunit protein uS8 (132 aa).

Belongs to the universal ribosomal protein uS8 family. Part of the 30S ribosomal subunit. Contacts proteins S5 and S12.

Its function is as follows. One of the primary rRNA binding proteins, it binds directly to 16S rRNA central domain where it helps coordinate assembly of the platform of the 30S subunit. The protein is Small ribosomal subunit protein uS8 of Bradyrhizobium sp. (strain BTAi1 / ATCC BAA-1182).